The following is a 290-amino-acid chain: Fat storage-inducing transmembrane protein 1 (290 aa).

Topologically, residues 1–18 are lumenal; that stretch reads MERGPVVGAGLGARARIR. The helical transmembrane segment at 19–39 threads the bilayer; sequence TLLGCLVKVLLWVASALLYFG. At 40 to 54 the chain is on the cytoplasmic side; sequence SEQAARLLGSPCLRR. The helical transmembrane segment at 55-75 threads the bilayer; it reads LYHAWLAAVVIFGPLLQFHVN. Residues 76–94 lie on the Lumenal side of the membrane; sequence PRTIFASHGNFFNIKFVNS. A helical membrane pass occupies residues 95–115; sequence AWGWTCTFLGGFVLLVVFLAT. Residues 116–141 are Cytoplasmic-facing; it reads RRVAVTARHLSRLVVGAAVWRGAGRA. A helical membrane pass occupies residues 142-162; that stretch reads FLLIEDLTGSCFEPLPQGLLL. Topologically, residues 163 to 187 are lumenal; it reads HELPDRRSRLAAGHQWRGYTVSSHT. Residue His186 is part of the active site. A helical transmembrane segment spans residues 188 to 208; sequence FLLTFCCLLMAEEAAVFAKYL. Over 209 to 220 the chain is Cytoplasmic; that stretch reads AHGLPAGAPLRL. Residues 221 to 241 form a helical membrane-spanning segment; it reads VFLLNVLLLGLWNFLLLCTVI. Topologically, residues 242-249 are lumenal; that stretch reads YFHQYTHK. His244 is a catalytic residue. A helical transmembrane segment spans residues 250-270; it reads VVGAAVGTFAWYLTYGSWYHQ. Residues 271–290 lie on the Cytoplasmic side of the membrane; it reads PWSPGSPGHGLFTHPSRKHN.

The protein belongs to the FIT family. FIT1 subfamily.

The protein resides in the endoplasmic reticulum membrane. Functionally, plays an important role in the formation of lipid droplets (LDs) which are storage organelles at the center of lipid and energy homeostasis. Directly binds to diacylglycerol (DAGs) and triacylglycerol. This Sus scrofa (Pig) protein is Fat storage-inducing transmembrane protein 1.